The sequence spans 347 residues: Aspartate-semialdehyde dehydrogenase (347 aa).

Residues 13 to 16 (TGAV) and 41 to 42 (RS) each bind NADP(+). R101 is a binding site for phosphate. C132 (acyl-thioester intermediate) is an active-site residue. Q159 contributes to the substrate binding site. Residue 162–163 (SG) coordinates NADP(+). K216 contacts phosphate. Substrate is bound at residue R238. H245 (proton acceptor) is an active-site residue. Residue N319 participates in NADP(+) binding.

Belongs to the aspartate-semialdehyde dehydrogenase family. Homodimer.

The enzyme catalyses L-aspartate 4-semialdehyde + phosphate + NADP(+) = 4-phospho-L-aspartate + NADPH + H(+). The protein operates within amino-acid biosynthesis; L-lysine biosynthesis via DAP pathway; (S)-tetrahydrodipicolinate from L-aspartate: step 2/4. It participates in amino-acid biosynthesis; L-methionine biosynthesis via de novo pathway; L-homoserine from L-aspartate: step 2/3. Its pathway is amino-acid biosynthesis; L-threonine biosynthesis; L-threonine from L-aspartate: step 2/5. Functionally, catalyzes the NADPH-dependent formation of L-aspartate-semialdehyde (L-ASA) by the reductive dephosphorylation of L-aspartyl-4-phosphate. This Legionella pneumophila protein is Aspartate-semialdehyde dehydrogenase.